The chain runs to 798 residues: Suppressor of spindle checkpoint defect 1 (798 aa).

The stretch at 339–359 (ESIQQSQVNVDDMCNRIANME) forms a coiled coil.

This sequence belongs to the APC5 family. As to quaternary structure, the APC/C complex is probably composed of at least 12 subunits: apc-2, apc-10, apc-11, cdc-26, emb-1, emb-27, emb-30, mat-1, mat-2, mat-3, such-1 and gfi-3. Expressed in head neurons, vulval precursor cells and in mature sperm stored in the spermatheca.

The protein operates within protein modification; protein ubiquitination. Probable component of the anaphase promoting complex/cyclosome (APC/C), a cell cycle-regulated E3 ubiquitin ligase that controls progression through mitosis and the G1 phase of the cell cycle. The APC/C complex acts by mediating ubiquitination and subsequent degradation of target proteins. Required for the metaphase to anaphase transition in meiosis. Plays a role in the segregation of DNA and centrioles during meiosis in male germ cells. This chain is Suppressor of spindle checkpoint defect 1, found in Caenorhabditis elegans.